The primary structure comprises 383 residues: ERCC4 domain-containing protein EP364R (383 aa).

Residues 3 to 101 (FLVADHREHH…QLYFFVEGPA (99 aa)) enclose the ERCC4 domain. Positions 336 to 367 (LHKVSDEASENASHDASENASDKVSSPTGHQT) are disordered. Residues 347 to 356 (ASHDASENAS) show a composition bias toward basic and acidic residues. The span at 357-367 (DKVSSPTGHQT) shows a compositional bias: polar residues.

This sequence belongs to the asfivirus EP364R family.

Plays a role in the inhibition of type I interferon signaling pathway. Mechanistically, specifically interacts with 2',3'-cGAMP and cleaves it via its phosphodiesterase activity. In turn, prevents 2',3'-cGAMP interaction with host ER-resident STING1 leading to inhibition of downstream signaling pathway and type I interferon production. The chain is ERCC4 domain-containing protein EP364R from Ornithodoros (relapsing fever ticks).